A 396-amino-acid chain; its full sequence is Acetate kinase (396 aa).

A Mg(2+)-binding site is contributed by Asn-7. An ATP-binding site is contributed by Lys-14. Residue Arg-91 participates in substrate binding. The active-site Proton donor/acceptor is Asp-148. ATP contacts are provided by residues 208–212, 283–285, and 331–335; these read HLGNG, DFR, and GLGEN. Glu-384 provides a ligand contact to Mg(2+).

This sequence belongs to the acetokinase family. Homodimer. It depends on Mg(2+) as a cofactor. Requires Mn(2+) as cofactor.

It localises to the cytoplasm. It catalyses the reaction acetate + ATP = acetyl phosphate + ADP. The protein operates within metabolic intermediate biosynthesis; acetyl-CoA biosynthesis; acetyl-CoA from acetate: step 1/2. In terms of biological role, catalyzes the formation of acetyl phosphate from acetate and ATP. Can also catalyze the reverse reaction. This is Acetate kinase from Alkaliphilus metalliredigens (strain QYMF).